A 386-amino-acid polypeptide reads, in one-letter code: Sphingosine 1-phosphate receptor 4 (386 aa).

At 1 to 56 the chain is on the extracellular side; that stretch reads MNISTWSTLVTPESCHRLAASGHSLLIVLHYNHSGRLASRGGSEDGGGLGMLRGPS. Asn-2 and Asn-32 each carry an N-linked (GlcNAc...) asparagine glycan. The chain crosses the membrane as a helical span at residues 57-77; the sequence is VAAGCLVVLENAMVLAAIAIY. Residues 78 to 87 are Cytoplasmic-facing; that stretch reads MRSRRWVYYC. A helical transmembrane segment spans residues 88–108; that stretch reads LLNITLSDLLTGLAYVVNVLL. Residues 109-120 lie on the Extracellular side of the membrane; sequence SGTRTFQLSPVH. A helical membrane pass occupies residues 121 to 141; sequence WFLREGLLFMALAASTFSLLF. The Cytoplasmic segment spans residues 142-163; the sequence is TAGERFATMVRVAESGATKTSR. A helical membrane pass occupies residues 164–184; the sequence is VYGCIGLCWLLAAILGLLPLL. Topologically, residues 185 to 208 are extracellular; it reads GWNCVCAFPRCSSLLPLYSKGYVL. The helical transmembrane segment at 209–229 threads the bilayer; it reads FCVVVFALILVAILSLYGAIF. The Cytoplasmic portion of the chain corresponds to 230–254; that stretch reads RVVRANGQKSPRPPARRKSRRLLNT. A helical membrane pass occupies residues 255-275; it reads VLMILVAFVVCWGPLFGLLLA. Residues 276 to 290 are Extracellular-facing; sequence DIFGSNVWAQEYLRG. Residues 291–311 form a helical membrane-spanning segment; sequence MDWILALAVFNSAINPLIYSF. The Cytoplasmic segment spans residues 312 to 386; it reads RSREVQRAVL…LSSISSVRST (75 aa). The S-palmitoyl cysteine moiety is linked to residue Cys-325.

Belongs to the G-protein coupled receptor 1 family. In terms of tissue distribution, specifically expressed in fetal and adult lymphoid and hematopoietic tissue. Expressed in lung, spleen, thymus and lymph node but absent in other non-lymphatic tissue. Coexpressed with GNA15 at the same relative levels in all tissues examined, with the highest levels in adult spleen and lung.

The protein localises to the cell membrane. Functionally, receptor for the lysosphingolipid sphingosine 1-phosphate (S1P). S1P is a bioactive lysophospholipid that elicits diverse physiological effect on most types of cells and tissues. May be involved in cell migration processes that are specific for lymphocytes. This chain is Sphingosine 1-phosphate receptor 4 (S1pr4), found in Mus musculus (Mouse).